A 445-amino-acid polypeptide reads, in one-letter code: UPF0210 protein SUB1511 (445 aa).

The protein belongs to the UPF0210 family. Homodimer.

The protein is UPF0210 protein SUB1511 of Streptococcus uberis (strain ATCC BAA-854 / 0140J).